Reading from the N-terminus, the 225-residue chain is MKLVMLLRPPPQTHRADTTDGLPGLQEEPRGGDGPTCSGPAPAIPDSPSRCLSRGFAGRDPGCHRNRHRVHPYILSGGQRILVTSSSSSTVQGPLSSGSSQHSQSRGRPPSPDSTETERARTPVNSDRQRAGEFDLLKGGCRPCCLIEGNGNKVKCLRFRLKKSHRSRFLDITTTFWATGDEGSDRQGNGTILITFTDTTQRDLFLGSVSIPGELSVRRITISTD.

Disordered regions lie at residues 1–67 and 85–128; these read MKLV…HRNR and SSSS…NSDR. The segment covering 92–108 has biased composition (low complexity); that stretch reads QGPLSSGSSQHSQSRGR. A compositionally biased stretch (basic and acidic residues) spans 116 to 128; sequence ETERARTPVNSDR.

The protein belongs to the papillomaviridae E8^E2C protein family.

It is found in the host nucleus. Its function is as follows. Plays a role in limiting the replication of viral DNA in keratinocytes. Recruits the host NCoR/SMRT complex to viral replication foci to mediate repression of both viral replication and transcription. The chain is Protein E8^E2C from Bos taurus (Bovine).